A 300-amino-acid chain; its full sequence is Transcriptional dual regulator GltC (300 aa).

The 58-residue stretch at Met-1 to Thr-58 folds into the HTH lysR-type domain. A DNA-binding region (H-T-H motif) is located at residues Val-18–Ala-37.

The protein belongs to the LysR transcriptional regulatory family. As to quaternary structure, interacts with gutamate dehydrogenase RocG.

With respect to regulation, activated by alpha-ketoglutarate and inhibited by glutamate and by RocG. In terms of biological role, positive regulator of glutamate biosynthesis (gltAB genes). Negatively regulates its own expression. The chain is Transcriptional dual regulator GltC (gltC) from Bacillus subtilis (strain 168).